The chain runs to 255 residues: Small ribosomal subunit protein uS2 (255 aa).

It belongs to the universal ribosomal protein uS2 family.

The protein is Small ribosomal subunit protein uS2 of Streptococcus thermophilus (strain ATCC BAA-491 / LMD-9).